The chain runs to 169 residues: S-ribosylhomocysteine lyase (169 aa).

Fe cation is bound by residues His54, His58, and Cys128.

Belongs to the LuxS family. As to quaternary structure, homodimer. Requires Fe cation as cofactor.

It catalyses the reaction S-(5-deoxy-D-ribos-5-yl)-L-homocysteine = (S)-4,5-dihydroxypentane-2,3-dione + L-homocysteine. Its function is as follows. Involved in the synthesis of autoinducer 2 (AI-2) which is secreted by bacteria and is used to communicate both the cell density and the metabolic potential of the environment. The regulation of gene expression in response to changes in cell density is called quorum sensing. Catalyzes the transformation of S-ribosylhomocysteine (RHC) to homocysteine (HC) and 4,5-dihydroxy-2,3-pentadione (DPD). This chain is S-ribosylhomocysteine lyase, found in Shewanella pealeana (strain ATCC 700345 / ANG-SQ1).